A 248-amino-acid chain; its full sequence is Probable transcriptional regulatory protein RPD_4171 (248 aa).

The tract at residues 1–22 (MAGHSQFKNIMHRKGKQDAQRS) is disordered.

It belongs to the TACO1 family.

Its subcellular location is the cytoplasm. This is Probable transcriptional regulatory protein RPD_4171 from Rhodopseudomonas palustris (strain BisB5).